Here is a 903-residue protein sequence, read N- to C-terminus: Protein translocase subunit SecA (903 aa).

Residues glutamine 87, 105 to 109 (GEGKT), and aspartate 507 contribute to the ATP site. The tract at residues 854 to 893 (STMADSSGDVKSSTAESKAPYVRDGRKVGRNEPCPCGSGK) is disordered. Residues 856–869 (MADSSGDVKSSTAE) show a composition bias toward polar residues. Positions 874–883 (YVRDGRKVGR) are enriched in basic and acidic residues. Zn(2+) is bound by residues cysteine 887, cysteine 889, cysteine 898, and histidine 899.

Belongs to the SecA family. In terms of assembly, monomer and homodimer. Part of the essential Sec protein translocation apparatus which comprises SecA, SecYEG and auxiliary proteins SecDF-YajC and YidC. The cofactor is Zn(2+).

The protein localises to the cell inner membrane. It localises to the cytoplasm. It catalyses the reaction ATP + H2O + cellular proteinSide 1 = ADP + phosphate + cellular proteinSide 2.. Functionally, part of the Sec protein translocase complex. Interacts with the SecYEG preprotein conducting channel. Has a central role in coupling the hydrolysis of ATP to the transfer of proteins into and across the cell membrane, serving both as a receptor for the preprotein-SecB complex and as an ATP-driven molecular motor driving the stepwise translocation of polypeptide chains across the membrane. This chain is Protein translocase subunit SecA, found in Nitrosococcus oceani (strain ATCC 19707 / BCRC 17464 / JCM 30415 / NCIMB 11848 / C-107).